Consider the following 377-residue polypeptide: Probable pectin lyase D (377 aa).

Positions 1 to 17 (MRVSAFALLAAAATAAA) are cleaved as a signal peptide. Cystine bridges form between C80–C99 and C89–C223. The N-linked (GlcNAc...) asparagine glycan is linked to N126. R253 is a catalytic residue. Cysteines 321 and 329 form a disulfide.

This sequence belongs to the polysaccharide lyase 1 family.

Its subcellular location is the secreted. It carries out the reaction Eliminative cleavage of (1-&gt;4)-alpha-D-galacturonan methyl ester to give oligosaccharides with 4-deoxy-6-O-methyl-alpha-D-galact-4-enuronosyl groups at their non-reducing ends.. In terms of biological role, pectinolytic enzymes consist of four classes of enzymes: pectin lyase, polygalacturonase, pectin methylesterase and rhamnogalacturonase. Among pectinolytic enzymes, pectin lyase is the most important in depolymerization of pectin, since it cleaves internal glycosidic bonds of highly methylated pectins. This Emericella nidulans (strain FGSC A4 / ATCC 38163 / CBS 112.46 / NRRL 194 / M139) (Aspergillus nidulans) protein is Probable pectin lyase D (pelD).